The chain runs to 303 residues: Regulatory protein PocR (303 aa).

The HTH araC/xylS-type domain occupies 195-293 (KKALRYIDAH…QVTPQAYRQQ (99 aa)). DNA-binding regions (H-T-H motif) lie at residues 212–233 (EDVA…KKYQ) and 260–283 (IASI…RQTY).

Its pathway is cofactor biosynthesis; adenosylcobalamin biosynthesis [regulation]. It participates in polyol metabolism; 1,2-propanediol degradation [regulation]. Positive regulatory protein of pdu and cob operons. Positively autoregulates its own expression. This chain is Regulatory protein PocR (pocR), found in Salmonella typhimurium (strain LT2 / SGSC1412 / ATCC 700720).